A 383-amino-acid chain; its full sequence is Caspase a (383 aa).

A propeptide spanning residues 1 to 142 (MAKSIKDHLQ…ETYEIKDKSV (142 aa)) is cleaved from the precursor. The region spanning 8–81 (HLQDALSNIG…RGIKCNAVAE (74 aa)) is the Pyrin domain. Positions 87–106 (TGQGGVSQPEPPVPEPIPKD) are disordered. Catalysis depends on residues His220 and Cys270. Positions 275-296 (HGRVWASDGEPDEPIEIEDDDF) are excised as a propeptide.

This sequence belongs to the peptidase C14A family. As to quaternary structure, heterotetramer that consists of two anti-parallel arranged heterodimers, each one formed by a 20 kDa (p20) and a 10 kDa (p10) subunit. Interacts (via pyrin domain) with pycard (via pyrin domain). Interacts with caspb. Component of NLRP1 inflammasomes. Inflammasomes are supramolecular complexes that assemble in the cytosol in response to pathogens and other damage-associated signals and play critical roles in innate immunity and inflammation. The NLRP1 inflammasome is composed of the signal sensor nlrp1, and the adapter pycard (asc), which recruit effector pro-inflammatory caspases caspa and/or caspb. The interaction between nlrp1 and pycard is required for the sequential recruitment of caspa and then caspb. Caspa is preferentially recruited first and this causes the cleavage of pro-il1b into the midformed il1b. This is followed by the recruitment of caspb, which is activated and cleaves the midformed il1b resulting in il1b maturation. Interacts with caiap. Post-translationally, the two subunits are derived from the precursor sequence by an autocatalytic mechanism.

The protein resides in the inflammasome. The protein localises to the cytoplasm. It carries out the reaction Strict requirement for an Asp residue at position P1 and has a preferred cleavage sequence of Tyr-Val-Ala-Asp-|-.. In terms of biological role, thiol protease which cleaves IL-1 beta (il1b), releasing the mature cytokine which is involved in a variety of inflammatory processes, and mediates apoptosis. Component of the NLRP1 inflammasome, which plays a crucial role in innate immunity and inflammation. In response to pathogens and other damage-associated signals, recruited to the NLRP1 inflammasome in its precursor form. Its subsequent activation causes the cleavage of pro-il1b into the midformed il1b, which then evetually leads to il1b maturation and secretion in the extracellular milieu. Required for the development of the cartilaginous pharyngeal skeleton. This chain is Caspase a, found in Danio rerio (Zebrafish).